A 40-amino-acid polypeptide reads, in one-letter code: Proteinase inhibitor IIB (40 aa).

Disulfide bonds link Cys2/Cys16, Cys6/Cys28, and Cys12/Cys38.

Belongs to the protease inhibitor I20 (potato type II proteinase inhibitor) family.

The protein resides in the secreted. Its function is as follows. Inhibits chymotrypsin and subtilisin strongly. This chain is Proteinase inhibitor IIB, found in Solanum tuberosum (Potato).